We begin with the raw amino-acid sequence, 209 residues long: Ribosomal RNA small subunit methyltransferase G (209 aa).

Residues Gly71, Phe76, Ala122–Glu123, and Arg135 each bind S-adenosyl-L-methionine.

The protein belongs to the methyltransferase superfamily. RNA methyltransferase RsmG family.

The protein localises to the cytoplasm. Its function is as follows. Specifically methylates the N7 position of a guanine in 16S rRNA. In Phocaeicola vulgatus (strain ATCC 8482 / DSM 1447 / JCM 5826 / CCUG 4940 / NBRC 14291 / NCTC 11154) (Bacteroides vulgatus), this protein is Ribosomal RNA small subunit methyltransferase G.